Reading from the N-terminus, the 204-residue chain is Venom allergen 5 (204 aa).

Intrachain disulfides connect Cys4–Cys17, Cys8–Cys101, Cys26–Cys94, and Cys170–Cys187. The region spanning 45 to 189 (LKEHNDFRQK…WHKHYLVCNY (145 aa)) is the SCP domain.

The protein belongs to the CRISP family. Venom allergen 5-like subfamily. Expressed by the venom gland.

The protein localises to the secreted. The sequence is that of Venom allergen 5 from Vespula pensylvanica (Western yellow jacket).